The primary structure comprises 975 residues: Macrophage colony-stimulating factor 1 receptor 1 (975 aa).

A signal peptide spans 1–17; it reads MQSFLPLLMGIMASASS. Topologically, residues 18–519 are extracellular; that stretch reads VEWRHPVIWF…VEVSDKLFTS (502 aa). 5 Ig-like C2-type domains span residues 34 to 113, 125 to 208, 221 to 310, 329 to 407, and 404 to 513; these read SSEV…VYVK, SLRV…INVI, MDEY…LLVV, GLSV…FHVK, and FHVK…VEVS. 3 disulfide bridges follow: Cys-49-Cys-93, Cys-140-Cys-189, and Cys-236-Cys-292. N-linked (GlcNAc...) asparagine glycans are attached at residues Asn-156, Asn-165, Asn-246, Asn-250, Asn-289, Asn-301, Asn-399, Asn-420, and Asn-451. A disulfide bridge links Cys-426 with Cys-495. A helical membrane pass occupies residues 520–540; the sequence is TLIGAAGVLAIFLLLLVFLLY. Residues 541–975 are Cytoplasmic-facing; the sequence is KYKQKPRFEI…LMKTNNYQFC (435 aa). Positions 544–576 are regulatory juxtamembrane domain; the sequence is QKPRFEIRWKIIEAREGNNYTFIDPTQLPYNEK. Tyr-563 is subject to Phosphotyrosine; by autocatalysis. The 335-residue stretch at 584-918 folds into the Protein kinase domain; sequence LKLGKVLGAG…MISQMINRLL (335 aa). Residues 590 to 598 and Lys-619 each bind ATP; that span reads LGAGAFGKV. A phosphotyrosine; by autocatalysis mark is found at Tyr-702 and Tyr-726. Catalysis depends on Asp-782, which acts as the Proton acceptor. Positions 800–822 are activation loop; that stretch reads DFGLARDIMNDSNYVVKGNARLP. A phosphotyrosine; by autocatalysis mark is found at Tyr-813 and Tyr-929. A disordered region spans residues 939–963; that stretch reads EGEACDEPKRYDPPCERSCDHEEEE. The segment covering 944–958 has biased composition (basic and acidic residues); the sequence is DEPKRYDPPCERSCD. A Phosphotyrosine; by autocatalysis modification is found at Tyr-972.

The protein belongs to the protein kinase superfamily. Tyr protein kinase family. CSF-1/PDGF receptor subfamily. In terms of assembly, monomer. Homodimer. Interacts with CSF1. Autophosphorylated in response to CSF1 binding. autophosphorylation, leading to its degradation. Post-translationally, ubiquitinated. Becomes rapidly polyubiquitinated after autophosphorylation, leading to its degradation.

Its subcellular location is the cell membrane. It catalyses the reaction L-tyrosyl-[protein] + ATP = O-phospho-L-tyrosyl-[protein] + ADP + H(+). Its activity is regulated as follows. Present in an inactive conformation in the absence of bound ligand. CSF1 binding leads to dimerization and activation by autophosphorylation on tyrosine residues. Tyrosine-protein kinase that acts as a cell-surface receptor for CSF1 and plays an essential role in the regulation of survival, proliferation and differentiation of hematopoietic precursor cells, especially mononuclear phagocytes, such as macrophages and monocytes. Plays an important role in innate immunity and in inflammatory processes. Plays an important role in the regulation of osteoclast proliferation and differentiation, the regulation of bone resorption, and is required for normal bone development. Promotes reorganization of the actin cytoskeleton, regulates formation of membrane ruffles, cell adhesion and cell migration. Activates several signaling pathways in response to ligand binding. The chain is Macrophage colony-stimulating factor 1 receptor 1 (csf1r1) from Takifugu rubripes (Japanese pufferfish).